Reading from the N-terminus, the 306-residue chain is Serine/threonine-protein phosphatase PP2A-1 catalytic subunit (306 aa).

Positions 54, 56, 82, and 114 each coordinate Mn(2+). The Proton donor role is filled by histidine 115. Mn(2+)-binding residues include histidine 164 and histidine 238. The residue at position 306 (leucine 306) is a Leucine methyl ester.

This sequence belongs to the PPP phosphatase family. PP-2A subfamily. In terms of assembly, PP2A consists of a common heterodimeric core enzyme, composed of a 36 kDa catalytic subunit (subunit C) and a 65 kDa constant regulatory subunit (subunit A), that associates with a variety of regulatory subunits such as subunits B (the R2/B/PR55/B55, R3/B''/PR72/PR130/PR59 and R5/B'/B56 families). Interacts with TAF12B. Interacts with SRK2E/OST1. Interacts with TAP46. It depends on Mn(2+) as a cofactor. In terms of processing, reversibly methyl esterified on Leu-306 by leucine carboxyl methyltransferase 1 (LCMT1) and pectin methylesterase 1 (PME1). Carboxyl methylation influences the affinity of the catalytic subunit for the different regulatory subunits, thereby modulating the PP2A holoenzyme's substrate specificity, enzyme activity and cellular localization. Phosphorylation of either threonine (by autophosphorylation-activated protein kinase) or tyrosine results in inactivation of the phosphatase. Auto-dephosphorylation has been suggested as a mechanism for reactivation.

The protein localises to the cytoplasm. It catalyses the reaction O-phospho-L-seryl-[protein] + H2O = L-seryl-[protein] + phosphate. It carries out the reaction O-phospho-L-threonyl-[protein] + H2O = L-threonyl-[protein] + phosphate. The protein is Serine/threonine-protein phosphatase PP2A-1 catalytic subunit of Arabidopsis thaliana (Mouse-ear cress).